A 1581-amino-acid polypeptide reads, in one-letter code: Calmodulin-regulated spectrin-associated protein 1 (1581 aa).

The Calponin-homology (CH) domain maps to 215 to 330 (ESPAHQKVRY…FIAELFWWFE (116 aa)). Residues S216, S370, S374, and S415 each carry the phosphoserine modification. The disordered stretch occupies residues 351–399 (VLQQKSSRPPVPISNATKRSFLGSPAAMSPADQPPSTQPLAEGSHRYHL). The interval 424–470 (RQKQQKVSQTEEIPDQRHRSNSLTRVDGQPRGAIGAWPDKKNRPVSQ) is disordered. T511 is modified (phosphothreonine). Phosphoserine occurs at positions 550, 553, 560, 572, and 586. Residues 603-617 (KQITTKEDERGEGRP) are compositionally biased toward basic and acidic residues. Positions 603–649 (KQITTKEDERGEGRPRTIMAKRPSEGSQPMVRKKVSGGHGSRDLNRT) are disordered. Phosphoserine occurs at positions 626, 718, 724, 734, and 736. Basic and acidic residues predominate over residues 765 to 785 (ESAKLQEDMKVKEHEDKDDAS). Disordered stretches follow at residues 765–803 (ESAKLQEDMKVKEHEDKDDASGRSSPCLSTTSQLSSMSM) and 821–866 (LNSC…SKDP). 2 stretches are compositionally biased toward low complexity: residues 792–803 (LSTTSQLSSMSM) and 826–837 (TKSSTSSSQKTT). Basic and acidic residues predominate over residues 853–865 (QKREQSPGRHSKD). Residues 867–888 (ASLLASELVQLHMQLEEKRRAI) form a sufficient for interaction with SPTBN1 region. Coiled-coil stretches lie at residues 869–905 (LLASELVQLHMQLEEKRRAIEAQKKKMEALSARQRLK) and 1005–1037 (DVNECDLSIEKLNETISTLQQAILKISQQQEQL). Residues 899 to 918 (SARQRLKLGKAAFLHVVKKG) form a sufficient for interaction with calmodulin region. Disordered regions lie at residues 1064–1143 (FVEP…ELPE), 1225–1251 (PDEDGEVVGHESSVELGGDSDQKPGVG), 1288–1315 (QLEAEVELKRDEARRKAEEDRLRKEEEK), and 1332–1428 (QALE…DWET). At S1069 the chain carries Phosphoserine. Positions 1092–1103 (RPAELKVPKDRQ) are enriched in basic and acidic residues. Residues 1104 to 1132 (QGCSRSKTPTPSVETLPQSRSLPPSTHPR) show a composition bias toward polar residues. Position 1133 is a phosphoserine (S1133). Residues 1225-1237 (PDEDGEVVGHESS) show a composition bias toward basic and acidic residues. Residues 1265-1336 (AKKRAAFLLK…RRKQQQALEE (72 aa)) are a coiled coil. A compositionally biased stretch (basic residues) spans 1342–1353 (PKSKPKKPRPKS). Residues 1361–1372 (SDSGTKCSSTHN) show a composition bias toward polar residues. Low complexity predominate over residues 1373–1390 (LSQTHSGSSLSLASAATT). Residues S1378 and S1407 each carry the phosphoserine modification. In terms of domain architecture, CKK spans 1443 to 1576 (GPKLFKEPSS…QPKRPTVPKK (134 aa)). Y1516 is subject to Phosphotyrosine.

It belongs to the CAMSAP1 family. In terms of assembly, interacts with spectrin via SPTBN1; the interaction is direct. Interacts with calmodulin; calcium-dependent it prevents interaction with spectrin. Expressed in the central nervous system.

The protein localises to the cytoplasm. It localises to the cytoskeleton. Functionally, key microtubule-organizing protein that specifically binds the minus-end of non-centrosomal microtubules and regulates their dynamics and organization. Specifically recognizes growing microtubule minus-ends and stabilizes microtubules. Acts on free microtubule minus-ends that are not capped by microtubule-nucleating proteins or other factors and protects microtubule minus-ends from depolymerization. In contrast to CAMSAP2 and CAMSAP3, tracks along the growing tips of minus-end microtubules without significantly affecting the polymerization rate: binds at the very tip of the microtubules minus-end and acts as a minus-end tracking protein (-TIP) that dissociates from microtubules after allowing tubulin incorporation. Through interaction with spectrin may regulate neurite outgrowth. This is Calmodulin-regulated spectrin-associated protein 1 (Camsap1) from Mus musculus (Mouse).